The following is a 492-amino-acid chain: GlcNAc-binding protein A (492 aa).

The signal sequence occupies residues 1–23 (MNKSSTKTLIALSMMAVSSGVSA). The Chitin-binding type-4 domain maps to 24-204 (HGYVSETNDG…AFYNVIDVKF (181 aa)). A Chitin-binding type-3 domain is found at 443–484 (AGTKVLAEDSNVYQCKEFPYSGYCVQWTETATNFAPGVGSDW).

The protein belongs to the GbpA family.

It is found in the secreted. Functionally, probably interacts with GlcNAc residues. May promote attachment to both epithelial cell surfaces and chitin. This is GlcNAc-binding protein A from Aliivibrio fischeri (strain MJ11) (Vibrio fischeri).